Here is a 118-residue protein sequence, read N- to C-terminus: Large ribosomal subunit protein bL20 (118 aa).

It belongs to the bacterial ribosomal protein bL20 family.

Binds directly to 23S ribosomal RNA and is necessary for the in vitro assembly process of the 50S ribosomal subunit. It is not involved in the protein synthesizing functions of that subunit. The chain is Large ribosomal subunit protein bL20 from Tolumonas auensis (strain DSM 9187 / NBRC 110442 / TA 4).